The primary structure comprises 231 residues: Large ribosomal subunit protein uL1 (231 aa).

It belongs to the universal ribosomal protein uL1 family. Part of the 50S ribosomal subunit.

Binds directly to 23S rRNA. The L1 stalk is quite mobile in the ribosome, and is involved in E site tRNA release. In terms of biological role, protein L1 is also a translational repressor protein, it controls the translation of the L11 operon by binding to its mRNA. The sequence is that of Large ribosomal subunit protein uL1 from Methylocella silvestris (strain DSM 15510 / CIP 108128 / LMG 27833 / NCIMB 13906 / BL2).